The sequence spans 228 residues: MEEKKQQNVTIKGTKDGITLHLDDCCSFSELLIELDEKLSTHYYDGDGRSLIEVHVKVGNRYLTEVQQEEIRTLIRNKKNLVVDSIKSDVITKAEAIAWKEETEIVPISKIVRSGQVLHVKGNLLLIGDVNPGGTVIAGGNIFVVGSLRGIAHAGYYGDSDAVIAASVMNPMQLRISDVAMRAPEEKEDGAEAAECAYINENNHIVVDRLQLLTHLRPNLTKLERGIV.

It belongs to the MinC family. As to quaternary structure, interacts with MinD and FtsZ.

Functionally, cell division inhibitor that blocks the formation of polar Z ring septums. Rapidly oscillates between the poles of the cell to destabilize FtsZ filaments that have formed before they mature into polar Z rings. Prevents FtsZ polymerization. In Bacillus cereus (strain G9842), this protein is Probable septum site-determining protein MinC.